The sequence spans 522 residues: Peptide methionine sulfoxide reductase MsrA/MsrB (522 aa).

One can recognise a Thioredoxin domain in the interval 17–174 (LALGACSPKI…ALALIRDPNA (158 aa)). Residues Cys68 and Cys71 are joined by a disulfide bond. The interval 199–354 (RTIYLAGGCF…PNGYCHIDIR (156 aa)) is peptide methionine sulfoxide reductase A. Residue Cys207 is part of the active site. The 124-residue stretch at 383–506 (DAELKRTLTE…NGASLKFIPL (124 aa)) folds into the MsrB domain. An intrachain disulfide couples Cys440 to Cys495. Catalysis depends on Cys495, which acts as the Nucleophile.

In the N-terminal section; belongs to the thioredoxin family. This sequence in the central section; belongs to the MsrA Met sulfoxide reductase family. It in the C-terminal section; belongs to the MsrB Met sulfoxide reductase family.

The enzyme catalyses L-methionyl-[protein] + [thioredoxin]-disulfide + H2O = L-methionyl-(S)-S-oxide-[protein] + [thioredoxin]-dithiol. It catalyses the reaction [thioredoxin]-disulfide + L-methionine + H2O = L-methionine (S)-S-oxide + [thioredoxin]-dithiol. The catalysed reaction is L-methionyl-[protein] + [thioredoxin]-disulfide + H2O = L-methionyl-(R)-S-oxide-[protein] + [thioredoxin]-dithiol. Its function is as follows. Has an important function as a repair enzyme for proteins that have been inactivated by oxidation. Catalyzes the reversible oxidation-reduction of methionine sulfoxide in proteins to methionine. The protein is Peptide methionine sulfoxide reductase MsrA/MsrB (msrAB) of Neisseria meningitidis serogroup A / serotype 4A (strain DSM 15465 / Z2491).